We begin with the raw amino-acid sequence, 630 residues long: Biosynthetic arginine decarboxylase (630 aa).

K99 is subject to N6-(pyridoxal phosphate)lysine. 281 to 291 (VDIGGGLGVDY) provides a ligand contact to substrate.

This sequence belongs to the Orn/Lys/Arg decarboxylase class-II family. SpeA subfamily. It depends on Mg(2+) as a cofactor. Pyridoxal 5'-phosphate is required as a cofactor.

The catalysed reaction is L-arginine + H(+) = agmatine + CO2. It participates in amine and polyamine biosynthesis; agmatine biosynthesis; agmatine from L-arginine: step 1/1. Catalyzes the biosynthesis of agmatine from arginine. This is Biosynthetic arginine decarboxylase from Bacteroides fragilis (strain ATCC 25285 / DSM 2151 / CCUG 4856 / JCM 11019 / LMG 10263 / NCTC 9343 / Onslow / VPI 2553 / EN-2).